The sequence spans 248 residues: MFPIQIAPNDPRLTQICARWDLTPNDNAEFSLLFEEDILTLKKRDEPKLGGIMVDFVSGAVAHRRKFGGGRGQAIAKAVGLKAGATPTVVDGTAGLGRDAFVLASLGCRVLLIERHPVVAALLEDGLRRAYLDGEIGPWMQQRMQLVHGSSLEALDNLEDKPDVVYLDPMYPHREKSALVKKEMRVFQSLVGADTDADGLLAPALRLAQKRVVVKRPDYAEDLDGVRPSTRIETKKNRFDVYVKAAMG.

Residues R98–D99, E114–R115, S150–S151, and D168 contribute to the S-adenosyl-L-methionine site.

The protein belongs to the methyltransferase superfamily. RsmJ family.

Its subcellular location is the cytoplasm. It carries out the reaction guanosine(1516) in 16S rRNA + S-adenosyl-L-methionine = N(2)-methylguanosine(1516) in 16S rRNA + S-adenosyl-L-homocysteine + H(+). Its function is as follows. Specifically methylates the guanosine in position 1516 of 16S rRNA. The polypeptide is Ribosomal RNA small subunit methyltransferase J (Shewanella amazonensis (strain ATCC BAA-1098 / SB2B)).